Here is a 514-residue protein sequence, read N- to C-terminus: Na(+)/H(+) antiporter NhaB (514 aa).

The next 11 membrane-spanning stretches (helical) occupy residues 21-41 (LAIVVFLIINPIVFFFISPFI), 43-63 (GWLLVAEFIFTLAMALKCYPL), 88-108 (IMANFEVILLLIFMVAGIFFM), 143-163 (FLDALTVVAVIISVAMGFYGV), 203-223 (LMMHAGVGTALGGVMTVVGEP), 239-259 (FFLRMAPVTIPVFICGLLTCF), 304-324 (ALIAIWLILGLAFHLAAVGLI), 349-369 (QESLPFTALLVVFFSVVAVII), 390-410 (LALFYLFNGLLSSISDNVFVA), 448-468 (ATPNGQAAFLFLLTSSISPLI), and 484-504 (IVLSIIGLLAIEFILPAATIW).

It belongs to the NhaB Na(+)/H(+) (TC 2.A.34) antiporter family.

It is found in the cell inner membrane. It catalyses the reaction 2 Na(+)(in) + 3 H(+)(out) = 2 Na(+)(out) + 3 H(+)(in). In terms of biological role, na(+)/H(+) antiporter that extrudes sodium in exchange for external protons. The polypeptide is Na(+)/H(+) antiporter NhaB (Haemophilus influenzae (strain 86-028NP)).